Consider the following 439-residue polypeptide: UPF0229 protein Nham_0975 (439 aa).

A disordered region spans residues 39–106 (RSGRISDADG…AGTPDPSMKD (68 aa)). The segment covering 58–76 (STDEPRFEAAKDSGRREHV) has biased composition (basic and acidic residues).

It belongs to the UPF0229 family.

The chain is UPF0229 protein Nham_0975 from Nitrobacter hamburgensis (strain DSM 10229 / NCIMB 13809 / X14).